The primary structure comprises 145 residues: D-aminoacyl-tRNA deacylase (145 aa).

Positions 137–138 (GP) match the Gly-cisPro motif, important for rejection of L-amino acids motif.

The protein belongs to the DTD family. Homodimer.

It is found in the cytoplasm. The catalysed reaction is glycyl-tRNA(Ala) + H2O = tRNA(Ala) + glycine + H(+). It carries out the reaction a D-aminoacyl-tRNA + H2O = a tRNA + a D-alpha-amino acid + H(+). An aminoacyl-tRNA editing enzyme that deacylates mischarged D-aminoacyl-tRNAs. Also deacylates mischarged glycyl-tRNA(Ala), protecting cells against glycine mischarging by AlaRS. Acts via tRNA-based rather than protein-based catalysis; rejects L-amino acids rather than detecting D-amino acids in the active site. By recycling D-aminoacyl-tRNA to D-amino acids and free tRNA molecules, this enzyme counteracts the toxicity associated with the formation of D-aminoacyl-tRNA entities in vivo and helps enforce protein L-homochirality. The sequence is that of D-aminoacyl-tRNA deacylase from Cronobacter sakazakii (strain ATCC BAA-894) (Enterobacter sakazakii).